A 570-amino-acid polypeptide reads, in one-letter code: Sulfite reductase [NADPH] hemoprotein beta-component (570 aa).

Residues Cys434, Cys440, Cys479, and Cys483 each contribute to the [4Fe-4S] cluster site. Cys483 is a binding site for siroheme.

It belongs to the nitrite and sulfite reductase 4Fe-4S domain family. As to quaternary structure, alpha(8)-beta(8). The alpha component is a flavoprotein, the beta component is a hemoprotein. Siroheme is required as a cofactor. The cofactor is [4Fe-4S] cluster.

The enzyme catalyses hydrogen sulfide + 3 NADP(+) + 3 H2O = sulfite + 3 NADPH + 4 H(+). Its pathway is sulfur metabolism; hydrogen sulfide biosynthesis; hydrogen sulfide from sulfite (NADPH route): step 1/1. Component of the sulfite reductase complex that catalyzes the 6-electron reduction of sulfite to sulfide. This is one of several activities required for the biosynthesis of L-cysteine from sulfate. The sequence is that of Sulfite reductase [NADPH] hemoprotein beta-component from Salmonella paratyphi A (strain ATCC 9150 / SARB42).